Consider the following 236-residue polypeptide: Ubiquinone biosynthesis O-methyltransferase (236 aa).

4 residues coordinate S-adenosyl-L-methionine: Arg39, Gly59, Asp80, and Met124.

Belongs to the methyltransferase superfamily. UbiG/COQ3 family.

The enzyme catalyses a 3-demethylubiquinol + S-adenosyl-L-methionine = a ubiquinol + S-adenosyl-L-homocysteine + H(+). It carries out the reaction a 3-(all-trans-polyprenyl)benzene-1,2-diol + S-adenosyl-L-methionine = a 2-methoxy-6-(all-trans-polyprenyl)phenol + S-adenosyl-L-homocysteine + H(+). Its pathway is cofactor biosynthesis; ubiquinone biosynthesis. O-methyltransferase that catalyzes the 2 O-methylation steps in the ubiquinone biosynthetic pathway. The chain is Ubiquinone biosynthesis O-methyltransferase from Shewanella sp. (strain ANA-3).